Reading from the N-terminus, the 483-residue chain is Teichuronic acid biosynthesis protein TuaB (483 aa).

The next 11 membrane-spanning stretches (helical) occupy residues 15–34 (TSISTMCITIIQIVQFALLG), 41–63 (EFGLVGMITTVTVFAQIVLDMGF), 83–105 (WLNIMTGVLLFVLLYVSSPVIAG), 112–134 (LVFLVRILAIMFLIAPIGQQYQY), 154–176 (VLSFGYLAIAVFMMDAILAYVIS), 294–316 (LALVSFPLLIGLVSVSDAFITAV), 321–343 (WLAAVPILNVLAIVGILRVLMNP), 356–378 (LAFYWDSGVLLLYGLSLFAAVQT), 382–404 (LTVAWVYAIISVVNFLIGRWLLA), 411–433 (LSAYFQSIMKPFLITAAMGIIAF), and 448–470 (MRLAISVAAGALCYLFLLVKAYP).

It belongs to the polysaccharide synthase family.

The protein resides in the cell membrane. It participates in cell wall biogenesis; teichuronic acid biosynthesis. Functionally, might be involved in the translocation of teichuronic acid repeating units from the inner to the outer surface of the membrane. The sequence is that of Teichuronic acid biosynthesis protein TuaB (tuaB) from Bacillus subtilis (strain 168).